A 634-amino-acid polypeptide reads, in one-letter code: Probable threonine--tRNA ligase, cytoplasmic (634 aa).

Residues 1 to 61 (MSIYVTFKGQ…NENQKIELYD (61 aa)) form the TGS domain.

This sequence belongs to the class-II aminoacyl-tRNA synthetase family.

It localises to the cytoplasm. The catalysed reaction is tRNA(Thr) + L-threonine + ATP = L-threonyl-tRNA(Thr) + AMP + diphosphate + H(+). This is Probable threonine--tRNA ligase, cytoplasmic from Enterocytozoon bieneusi (strain H348) (Microsporidian parasite).